Consider the following 179-residue polypeptide: Peptidyl-tRNA hydrolase (179 aa).

Tyr-15 is a binding site for tRNA. His-20 functions as the Proton acceptor in the catalytic mechanism. Residues Tyr-66, Asn-68, and Asn-114 each coordinate tRNA.

This sequence belongs to the PTH family. As to quaternary structure, monomer.

It is found in the cytoplasm. It catalyses the reaction an N-acyl-L-alpha-aminoacyl-tRNA + H2O = an N-acyl-L-amino acid + a tRNA + H(+). Its function is as follows. Hydrolyzes ribosome-free peptidyl-tRNAs (with 1 or more amino acids incorporated), which drop off the ribosome during protein synthesis, or as a result of ribosome stalling. In terms of biological role, catalyzes the release of premature peptidyl moieties from peptidyl-tRNA molecules trapped in stalled 50S ribosomal subunits, and thus maintains levels of free tRNAs and 50S ribosomes. This chain is Peptidyl-tRNA hydrolase, found in Chlamydia trachomatis serovar L2b (strain UCH-1/proctitis).